The following is a 309-amino-acid chain: Pseudouridine-5'-phosphate glycosidase 2 (309 aa).

Glu-26 serves as the catalytic Proton donor. Lys-87 and Val-107 together coordinate substrate. Residue Asp-139 participates in Mn(2+) binding. 141 to 143 provides a ligand contact to substrate; that stretch reads SAD. Lys-160 serves as the catalytic Nucleophile.

The protein belongs to the pseudouridine-5'-phosphate glycosidase family. In terms of assembly, homotrimer. Mn(2+) serves as cofactor.

It carries out the reaction D-ribose 5-phosphate + uracil = psi-UMP + H2O. Catalyzes the reversible cleavage of pseudouridine 5'-phosphate (PsiMP) to ribose 5-phosphate and uracil. Functions biologically in the cleavage direction, as part of a pseudouridine degradation pathway. The polypeptide is Pseudouridine-5'-phosphate glycosidase 2 (Rhizobium johnstonii (strain DSM 114642 / LMG 32736 / 3841) (Rhizobium leguminosarum bv. viciae)).